The chain runs to 266 residues: Phage-like element PBSX protein XkdC (266 aa).

An ATP-binding site is contributed by 124–131 (GQPGSGKT).

To B.subtilis YqaM.

Functionally, may function as a transcriptional antiterminator. This chain is Phage-like element PBSX protein XkdC (xkdC), found in Bacillus subtilis (strain 168).